We begin with the raw amino-acid sequence, 391 residues long: Transaldolase (391 aa).

The interval 1 to 329 (MGKNLLEQLR…RLKVLDGQEH (329 aa)) is transaldolase. The Schiff-base intermediate with substrate role is filled by K136. 2 EF-hand domains span residues 329–364 (HIKH…FDAL) and 365–387 (DRDH…AFRL). Residues D342, D344, D346, E353, D365, D367, D369, K371, and E376 each coordinate Ca(2+).

The protein belongs to the transaldolase family. Type 1 subfamily.

It is found in the cytoplasm. It carries out the reaction D-sedoheptulose 7-phosphate + D-glyceraldehyde 3-phosphate = D-erythrose 4-phosphate + beta-D-fructose 6-phosphate. It participates in carbohydrate degradation; pentose phosphate pathway; D-glyceraldehyde 3-phosphate and beta-D-fructose 6-phosphate from D-ribose 5-phosphate and D-xylulose 5-phosphate (non-oxidative stage): step 2/3. Its function is as follows. Transaldolase is important for the balance of metabolites in the pentose-phosphate pathway. The chain is Transaldolase from Synechocystis sp. (strain ATCC 27184 / PCC 6803 / Kazusa).